Reading from the N-terminus, the 116-residue chain is Ferredoxin-like protein in nif region (116 aa).

The 28-residue stretch at 2 to 29 (AYTITSQCISCKLCSSVCPTGAIKIAEN) folds into the 4Fe-4S ferredoxin-type domain. Iron-sulfur cluster contacts are provided by Cys-9, Cys-12, Cys-15, and Cys-19.

This Nostoc sp. (strain PCC 7120 / SAG 25.82 / UTEX 2576) protein is Ferredoxin-like protein in nif region (fdxN).